We begin with the raw amino-acid sequence, 199 residues long: Recombination protein RecR (199 aa).

The C4-type zinc finger occupies 57-72; that stretch reads CSQCHNITDTDPCQIC. Residues 80-176 enclose the Toprim domain; sequence TTICVVQESR…KVTRLAHGLP (97 aa).

It belongs to the RecR family.

Its function is as follows. May play a role in DNA repair. It seems to be involved in an RecBC-independent recombinational process of DNA repair. It may act with RecF and RecO. The protein is Recombination protein RecR of Shouchella clausii (strain KSM-K16) (Alkalihalobacillus clausii).